We begin with the raw amino-acid sequence, 264 residues long: Thymidylate synthase (264 aa).

A dUMP-binding site is contributed by R21. A (6R)-5,10-methylene-5,6,7,8-tetrahydrofolate-binding site is contributed by H51. 126 to 127 (RR) lines the dUMP pocket. C146 serves as the catalytic Nucleophile. Residues 166–169 (RSAD), N177, and 207–209 (HIY) contribute to the dUMP site. A (6R)-5,10-methylene-5,6,7,8-tetrahydrofolate-binding site is contributed by D169. A263 is a (6R)-5,10-methylene-5,6,7,8-tetrahydrofolate binding site.

The protein belongs to the thymidylate synthase family. Bacterial-type ThyA subfamily. As to quaternary structure, homodimer.

Its subcellular location is the cytoplasm. It catalyses the reaction dUMP + (6R)-5,10-methylene-5,6,7,8-tetrahydrofolate = 7,8-dihydrofolate + dTMP. It participates in pyrimidine metabolism; dTTP biosynthesis. Catalyzes the reductive methylation of 2'-deoxyuridine-5'-monophosphate (dUMP) to 2'-deoxythymidine-5'-monophosphate (dTMP) while utilizing 5,10-methylenetetrahydrofolate (mTHF) as the methyl donor and reductant in the reaction, yielding dihydrofolate (DHF) as a by-product. This enzymatic reaction provides an intracellular de novo source of dTMP, an essential precursor for DNA biosynthesis. The sequence is that of Thymidylate synthase from Brucella abortus (strain 2308).